Consider the following 140-residue polypeptide: Large ribosomal subunit protein uL16 (140 aa).

This sequence belongs to the universal ribosomal protein uL16 family. As to quaternary structure, part of the 50S ribosomal subunit.

In terms of biological role, binds 23S rRNA and is also seen to make contacts with the A and possibly P site tRNAs. This is Large ribosomal subunit protein uL16 from Amoebophilus asiaticus (strain 5a2).